Consider the following 147-residue polypeptide: Male-specific protein scotti (147 aa).

The disordered stretch occupies residues E57–R76. A glycan (N-linked (GlcNAc...) asparagine) is linked at N128.

This sequence belongs to the male-specific scotti family.

Its function is as follows. Post-meiotically transcribed gene that has a role in late spermiogenesis; required for actin cone progression during spermatid individualization. This Drosophila simulans (Fruit fly) protein is Male-specific protein scotti.